A 316-amino-acid polypeptide reads, in one-letter code: 4-hydroxy-3-methylbut-2-enyl diphosphate reductase (316 aa).

Position 12 (C12) interacts with [4Fe-4S] cluster. (2E)-4-hydroxy-3-methylbut-2-enyl diphosphate-binding residues include H41 and H74. The dimethylallyl diphosphate site is built by H41 and H74. Isopentenyl diphosphate-binding residues include H41 and H74. Residue C96 coordinates [4Fe-4S] cluster. H124 lines the (2E)-4-hydroxy-3-methylbut-2-enyl diphosphate pocket. H124 provides a ligand contact to dimethylallyl diphosphate. H124 serves as a coordination point for isopentenyl diphosphate. Residue E126 is the Proton donor of the active site. A (2E)-4-hydroxy-3-methylbut-2-enyl diphosphate-binding site is contributed by T169. C199 contacts [4Fe-4S] cluster. (2E)-4-hydroxy-3-methylbut-2-enyl diphosphate contacts are provided by S227, S228, N229, and S271. Residues S227, S228, N229, and S271 each coordinate dimethylallyl diphosphate. The isopentenyl diphosphate site is built by S227, S228, N229, and S271.

This sequence belongs to the IspH family. The cofactor is [4Fe-4S] cluster.

The enzyme catalyses isopentenyl diphosphate + 2 oxidized [2Fe-2S]-[ferredoxin] + H2O = (2E)-4-hydroxy-3-methylbut-2-enyl diphosphate + 2 reduced [2Fe-2S]-[ferredoxin] + 2 H(+). It carries out the reaction dimethylallyl diphosphate + 2 oxidized [2Fe-2S]-[ferredoxin] + H2O = (2E)-4-hydroxy-3-methylbut-2-enyl diphosphate + 2 reduced [2Fe-2S]-[ferredoxin] + 2 H(+). It participates in isoprenoid biosynthesis; dimethylallyl diphosphate biosynthesis; dimethylallyl diphosphate from (2E)-4-hydroxy-3-methylbutenyl diphosphate: step 1/1. It functions in the pathway isoprenoid biosynthesis; isopentenyl diphosphate biosynthesis via DXP pathway; isopentenyl diphosphate from 1-deoxy-D-xylulose 5-phosphate: step 6/6. Functionally, catalyzes the conversion of 1-hydroxy-2-methyl-2-(E)-butenyl 4-diphosphate (HMBPP) into a mixture of isopentenyl diphosphate (IPP) and dimethylallyl diphosphate (DMAPP). Acts in the terminal step of the DOXP/MEP pathway for isoprenoid precursor biosynthesis. The polypeptide is 4-hydroxy-3-methylbut-2-enyl diphosphate reductase (Vibrio cholerae serotype O1 (strain ATCC 39315 / El Tor Inaba N16961)).